Here is a 120-residue protein sequence, read N- to C-terminus: DNA-binding protein HQ_1105A (120 aa).

Residues 1 to 55 form a disordered region; the sequence is MSETPDDLDELRQQRMEELRDQADGQQSQTSDNTAAAQEAAREKAEAQQEALLKQ. Residues 10–23 show a composition bias toward basic and acidic residues; the sequence is ELRQQRMEELRDQA. A compositionally biased stretch (polar residues) spans 24-34; it reads DGQQSQTSDNT.

Belongs to the PDCD5 family.

The protein is DNA-binding protein HQ_1105A of Haloquadratum walsbyi (strain DSM 16790 / HBSQ001).